The sequence spans 249 residues: Solute carrier family 25 member 35 (249 aa).

2 Solcar repeats span residues 1 to 90 (MDFL…AEAG) and 152 to 243 (QSWK…LRMV). 4 helical membrane-spanning segments follow: residues 38–58 (TYQRHYRNVFHAFITIGKVDG), 59–79 (LAALQRGLAPALLYQFLMNGI), 154–174 (WKVALAAAMVSGIAVVLAMTP), and 226–249 (LGPHTILSLFFWDQLRMVYYTYTK).

This sequence belongs to the mitochondrial carrier (TC 2.A.29) family.

The protein resides in the mitochondrion inner membrane. The catalysed reaction is a dicarboxylate(in) + sulfate(out) = a dicarboxylate(out) + sulfate(in). Its function is as follows. Putative antiporter that exchanges dicarboxylates and sulfur oxoanions across the inner membrane of mitochondria. This chain is Solute carrier family 25 member 35 (SLC25A35), found in Bos taurus (Bovine).